The primary structure comprises 301 residues: Protein FdhE homolog (301 aa).

The protein belongs to the FdhE family.

It localises to the cytoplasm. Functionally, necessary for formate dehydrogenase activity. This Erwinia tasmaniensis (strain DSM 17950 / CFBP 7177 / CIP 109463 / NCPPB 4357 / Et1/99) protein is Protein FdhE homolog.